A 504-amino-acid chain; its full sequence is Cytochrome P450 3A1 (504 aa).

Residue cysteine 443 participates in heme binding.

It belongs to the cytochrome P450 family. Heme serves as cofactor.

The protein localises to the endoplasmic reticulum membrane. It localises to the microsome membrane. The catalysed reaction is an organic molecule + reduced [NADPH--hemoprotein reductase] + O2 = an alcohol + oxidized [NADPH--hemoprotein reductase] + H2O + H(+). In terms of biological role, cytochromes P450 are a group of heme-thiolate monooxygenases. In liver microsomes, this enzyme is involved in an NADPH-dependent electron transport pathway. It oxidizes a variety of structurally unrelated compounds, including steroids, fatty acids, and xenobiotics. This chain is Cytochrome P450 3A1 (Cyp3a1), found in Rattus norvegicus (Rat).